A 248-amino-acid chain; its full sequence is 14-3-3-like protein G-BOX factor 14 lambda (248 aa).

Ser70, Ser112, and Ser193 each carry phosphoserine; by CRPK1. Thr214 carries the phosphothreonine; by CRPK1 modification.

Belongs to the 14-3-3 family. As to quaternary structure, interacts with SERK1 in the cell membrane. Component of the SERK1 signaling complex, composed of KAPP, CDC48A, GRF6 or GRF7, SERK1, SERK2, SERK3/BAK1 and BRI1. Interacts with TPK1. Interacts with ADF1. Binds to CRPK1 at the plasma membrane. Interacts with DREB1A and DREB1B in the nucleus when activated by CRPK1-mediated phosphorylation upon freezing. Interacts with CINV1. Binds to the N-terminal region of B1L. Post-translationally, transphosphorylated by SERK1. Phosphorylated by CRPK1 in response to cold.

It localises to the nucleus. The protein localises to the cell membrane. The protein resides in the cytoplasm. Functionally, is associated with a DNA binding complex that binds to the G box, a well-characterized cis-acting DNA regulatory element found in plant genes. Specific negative regulator of slow-vacuolar (SV) ion channel. Mediates F-actin dynamics possibly through inhibiting ADF1 phosphorylation. Negative regulator of freezing tolerance that modulates cold-responsive C-repeat-binding factors (CBF) DREB1A and DREB1B proteins stability by facilitating their ubiquitin-mediated degradation when activated by CRPK1-mediated phosphorylation in freezing conditions; this processus is counteracted by B1L. This is 14-3-3-like protein G-BOX factor 14 lambda from Arabidopsis thaliana (Mouse-ear cress).